A 494-amino-acid polypeptide reads, in one-letter code: Protein nucleotidyltransferase YdiU (494 aa).

G90, G92, R93, K113, D125, G126, R176, and R183 together coordinate ATP. The active-site Proton acceptor is the D252. The Mg(2+) site is built by N253 and D262. Residue D262 coordinates ATP.

This sequence belongs to the SELO family. The cofactor is Mg(2+). Mn(2+) serves as cofactor.

The enzyme catalyses L-seryl-[protein] + ATP = 3-O-(5'-adenylyl)-L-seryl-[protein] + diphosphate. It catalyses the reaction L-threonyl-[protein] + ATP = 3-O-(5'-adenylyl)-L-threonyl-[protein] + diphosphate. The catalysed reaction is L-tyrosyl-[protein] + ATP = O-(5'-adenylyl)-L-tyrosyl-[protein] + diphosphate. It carries out the reaction L-histidyl-[protein] + UTP = N(tele)-(5'-uridylyl)-L-histidyl-[protein] + diphosphate. The enzyme catalyses L-seryl-[protein] + UTP = O-(5'-uridylyl)-L-seryl-[protein] + diphosphate. It catalyses the reaction L-tyrosyl-[protein] + UTP = O-(5'-uridylyl)-L-tyrosyl-[protein] + diphosphate. Its function is as follows. Nucleotidyltransferase involved in the post-translational modification of proteins. It can catalyze the addition of adenosine monophosphate (AMP) or uridine monophosphate (UMP) to a protein, resulting in modifications known as AMPylation and UMPylation. This Alkalilimnicola ehrlichii (strain ATCC BAA-1101 / DSM 17681 / MLHE-1) protein is Protein nucleotidyltransferase YdiU.